A 112-amino-acid chain; its full sequence is Protein BEX3 (112 aa).

The segment at 1-45 (MANIHQENEEMEQPVQNGEEDRPLGGGEGHQPERNHRRGQARRLA) is disordered. The tract at residues 69 to 94 (EIFMEEMREIRRKLRELQLRNCLRIL) is interaction with p75NTR/NGFR. The tract at residues 69–112 (EIFMEEMREIRRKLRELQLRNCLRILMGELSNHHDHHDEFCLMP) is interaction with 14-3-3 epsilon. The Nuclear export signal motif lies at 78–88 (IRRKLRELQLR). Residues 101–105 (HHDHH) are his cluster. C109 is a Zn(2+) binding site.

This sequence belongs to the BEX family. Self-associates. Binds to the DEATH domain of p75NTR/NGFR. Interacts with 14-3-3 epsilon (YWHAE). Interacts with DIABLO/SMAC. Ubiquitinated. Degraded by the proteasome.

Its subcellular location is the nucleus. It localises to the cytoplasm. The protein localises to the cytosol. Its function is as follows. May be a signaling adapter molecule involved in NGFR/p75NTR-mediated apoptosis induced by NGF. Plays a role in zinc-triggered neuronal death. In absence of reductive stress, acts as a pseudosubstrate for the CRL2(FEM1B) complex: associates with FEM1B via zinc, thereby preventing association between FEM1B and its substrates. The sequence is that of Protein BEX3 from Bos taurus (Bovine).